The primary structure comprises 618 residues: MSDVIRLLPDSIANQIAAGEVIQRPASVVKELLENALDAGASIIRLDVREAGRELIRVTDNGKGMSQSDARMAFERHATSKIASFQDLFSLRTMGFRGEALASIAAVAQVELLTRRAEDELGTRLTINGSEVGEVATVTSPLGCILCVKNLFYNVPARRKFLKSNETEFRHILTEYERVALVNPQVAFSIYHSGELVQDLPPSPLKKRILDVFGKRMEKDLIPIGMKSPITNISGFVGRPDGARKRGALQYFFVNGRFMRHPYFHKAVMAAYEAIIPQGTMPNYFLYFDLEPSQIDVNIHPTKTEIKFSDEQAIFKLIGVVIREALSSSNAVPAIDFDRKELIDIPAYQGPGKNVVRPPVDLDPSYNPFKETGLTEPIRSSRRQSPDMGWNELFKQFEAKRDAEKMAEPPIRSEELFASTDFTPSAVSATPSTDMLCYVHRGRYLVTTLSRGLALVDFHRAHKRILYDRFMADESRRHIEQQQLLFPELLEFNPSDASAVKAAVDELQSVGFDLSPLGVSSYSLLAAPVQIIDCAADVVRDVIHTTLEDGRSSHEQMLELIATQIAEYQAIPCGKTPTAEEASDLLAELFASNDSTYTPDGKLIVSIIEEADIARRFE.

Belongs to the DNA mismatch repair MutL/HexB family.

Functionally, this protein is involved in the repair of mismatches in DNA. It is required for dam-dependent methyl-directed DNA mismatch repair. May act as a 'molecular matchmaker', a protein that promotes the formation of a stable complex between two or more DNA-binding proteins in an ATP-dependent manner without itself being part of a final effector complex. The protein is DNA mismatch repair protein MutL of Porphyromonas gingivalis (strain ATCC BAA-308 / W83).